Here is a 100-residue protein sequence, read N- to C-terminus: MTPWYLYLIRTADNKLYTGITTDVERRYQQHQSGKGAKALRGKGELTLAFSAPVGDRSLALRAEYRVKQLTKRQKERLVAEGAGFAELLSSLQTPKIKSD.

In terms of domain architecture, GIY-YIG spans 2–77 (TPWYLYLIRT…KQLTKRQKER (76 aa)).

The protein belongs to the UPF0213 family.

This Escherichia coli O8 (strain IAI1) protein is UPF0213 protein YhbQ.